We begin with the raw amino-acid sequence, 49 residues long: Cytochrome b559 subunit beta (49 aa).

Residues 24-40 (WLAVHVLGVPTVFFLGA) traverse the membrane as a helical segment. Residue H28 participates in heme binding.

The protein belongs to the PsbE/PsbF family. In terms of assembly, heterodimer of an alpha subunit and a beta subunit. PSII is composed of 1 copy each of membrane proteins PsbA, PsbB, PsbC, PsbD, PsbE, PsbF, PsbH, PsbI, PsbJ, PsbK, PsbL, PsbM, PsbT, PsbX, PsbY, Psb30/Ycf12, peripheral proteins PsbO, CyanoQ (PsbQ), PsbU, PsbV and a large number of cofactors. It forms dimeric complexes. Requires heme b as cofactor.

The protein resides in the cellular thylakoid membrane. Its function is as follows. This b-type cytochrome is tightly associated with the reaction center of photosystem II (PSII). PSII is a light-driven water:plastoquinone oxidoreductase that uses light energy to abstract electrons from H(2)O, generating O(2) and a proton gradient subsequently used for ATP formation. It consists of a core antenna complex that captures photons, and an electron transfer chain that converts photonic excitation into a charge separation. This chain is Cytochrome b559 subunit beta, found in Prochlorococcus marinus (strain MIT 9303).